A 564-amino-acid chain; its full sequence is Large neutral amino acids transporter small subunit 3 (564 aa).

A helical transmembrane segment spans residues Val20–Leu40. Asn54 and Asn57 each carry an N-linked (GlcNAc...) asparagine glycan. Transmembrane regions (helical) follow at residues Leu78 to Met98, Pro105 to Ala124, Leu131 to Phe151, Ser165 to Ile185, and Ala191 to Leu211. Phosphoserine is present on residues Ser262 and Ser267. Helical transmembrane passes span Ile303–Gly323 and Ser357–Met377. N-linked (GlcNAc...) asparagine glycosylation is present at Asn396. Phosphoserine is present on Ser398. Transmembrane regions (helical) follow at residues Ala424–Ile444, Leu451–Leu471, Leu490–Leu510, and Phe515–Leu535. An N-linked (GlcNAc...) asparagine glycan is attached at Asn558.

Belongs to the SLC43A transporter (TC 2.A.1.44) family. In terms of tissue distribution, expressed in the kidney cortex as well as liver, pancreas, and skeletal muscle. In kidney expressed in the glomerular tuft (at protein level). Expressed in liver, skeletal muscle and pancreas (at protein level).

The protein localises to the cell membrane. The protein resides in the apical cell membrane. Its subcellular location is the endoplasmic reticulum membrane. The catalysed reaction is D-leucine(in) = D-leucine(out). It catalyses the reaction L-leucine(in) = L-leucine(out). The enzyme catalyses L-isoleucine(in) = L-isoleucine(out). It carries out the reaction L-methionine(in) = L-methionine(out). The catalysed reaction is L-phenylalanine(in) = L-phenylalanine(out). It catalyses the reaction L-valine(in) = L-valine(out). Its function is as follows. Uniport that mediates the transport of neutral amino acids such as L-leucine, L-isoleucine, L-valine, and L-phenylalanine. The transport activity is sodium ions-independent, electroneutral and mediated by a facilitated diffusion. In Mus musculus (Mouse), this protein is Large neutral amino acids transporter small subunit 3.